The primary structure comprises 461 residues: Steroidogenic factor 1 (461 aa).

A DNA-binding region (nuclear receptor) is located at residues 10-85 (DELCPVCGDK…VGMRLEAVRA (76 aa)). Residues 13-33 (CPVCGDKVSGYHYGLLTCESC) form an NR C4-type zinc finger. N6-acetyllysine is present on residues K34, K38, and K72. The NR C4-type zinc-finger motif lies at 49–73 (CTESQSCKIDKTLRKRCPFCRFQKC). A Glycyl lysine isopeptide (Lys-Gly) (interchain with G-Cter in SUMO) cross-link involves residue K119. Residues 119–153 (KLETGPPMGVPPPPPPPPDYMLPPGLHVPEPKGLA) are disordered. Residues 126-139 (MGVPPPPPPPPDYM) show a composition bias toward pro residues. A Glycyl lysine isopeptide (Lys-Gly) (interchain with G-Cter in SUMO) cross-link involves residue K194. Position 203 is a phosphoserine; by CDK7 (S203). Residues 222–459 (GVPELILQLL…NLLIEMLQAK (238 aa)) enclose the NR LBD domain. A 1,2-diacyl-sn-glycero-3-phosphocholine contacts are provided by G341, Y436, and K440.

Belongs to the nuclear hormone receptor family. NR5 subfamily. In terms of assembly, binds DNA as a monomer. Part of a complex consisting of SFPQ, NONO and NR5A1. Interacts with NR0B2. Interacts with DGKQ and CDK7. Binds to and activated by HIPK3. Post-translationally, acetylation stimulates the transcriptional activity. Sumoylation reduces CDK7-mediated phosphorylation on Ser-203. In terms of processing, phosphorylated on Ser-203 by CDK7. This phosphorylation promotes transcriptional activity.

The protein resides in the nucleus. In terms of biological role, transcriptional activator. Seems to be essential for sexual differentiation and formation of the primary steroidogenic tissues. Binds to the Ad4 site found in the promoter region of steroidogenic P450 genes such as CYP11A, CYP11B and CYP21B. Also regulates the AMH/Muellerian inhibiting substance gene as well as the AHCH and STAR genes. 5'-YCAAGGYC-3' and 5'-RRAGGTCA-3' are the consensus sequences for the recognition by NR5A1. The SFPQ-NONO-NR5A1 complex binds to the CYP17 promoter and regulates basal and cAMP-dependent transcriptional activity. Binds phospholipids with a phosphatidylinositol (PI) headgroup, in particular PI(3,4)P2 and PI(3,4,5)P3. Activated by the phosphorylation of NR5A1 by HIPK3 leading to increased steroidogenic gene expression upon cAMP signaling pathway stimulation. The protein is Steroidogenic factor 1 (NR5A1) of Equus caballus (Horse).